The sequence spans 519 residues: Anthranilate synthase component 1 (519 aa).

L-tryptophan-binding positions include Ser-39 and Pro-290–Met-292. Residue Gly-327–Thr-328 participates in chorismate binding. Glu-360 serves as a coordination point for Mg(2+). Chorismate contacts are provided by residues Tyr-448, Arg-468, Gly-482 to Gly-484, and Gly-484. Position 497 (Glu-497) interacts with Mg(2+).

The protein belongs to the anthranilate synthase component I family. Heterotetramer consisting of two non-identical subunits: a beta subunit (TrpG) and a large alpha subunit (TrpE). Mg(2+) is required as a cofactor.

The enzyme catalyses chorismate + L-glutamine = anthranilate + pyruvate + L-glutamate + H(+). It participates in amino-acid biosynthesis; L-tryptophan biosynthesis; L-tryptophan from chorismate: step 1/5. With respect to regulation, feedback inhibited by tryptophan. In terms of biological role, part of a heterotetrameric complex that catalyzes the two-step biosynthesis of anthranilate, an intermediate in the biosynthesis of L-tryptophan. In the first step, the glutamine-binding beta subunit (TrpG) of anthranilate synthase (AS) provides the glutamine amidotransferase activity which generates ammonia as a substrate that, along with chorismate, is used in the second step, catalyzed by the large alpha subunit of AS (TrpE) to produce anthranilate. In the absence of TrpG, TrpE can synthesize anthranilate directly from chorismate and high concentrations of ammonia. The chain is Anthranilate synthase component 1 (trpE) from Serratia marcescens.